A 256-amino-acid chain; its full sequence is H-2 class II histocompatibility antigen, A-D alpha chain (256 aa).

An N-terminal signal peptide occupies residues 1 to 23; the sequence is MPCSRALILGVLALNTMLSLCGG. Residues 24–111 are alpha-1; the sequence is EDDIEADHVG…KRSNFTPATN (88 aa). Residues 24–218 are Extracellular-facing; it reads EDDIEADHVG…IPAPMSELTE (195 aa). An alpha-2 region spans residues 112–205; the sequence is EAPQATVFPK…GLEEPVLKHW (94 aa). The Ig-like C1-type domain maps to 114-206; it reads PQATVFPKSP…LEEPVLKHWE (93 aa). The cysteines at positions 134 and 190 are disulfide-linked. A glycan (N-linked (GlcNAc...) asparagine) is linked at asparagine 145. The interval 206 to 218 is connecting peptide; that stretch reads EPEIPAPMSELTE. The chain crosses the membrane as a helical span at residues 219 to 244; that stretch reads TVVCALGLSVGLVGIVVGTIFIIQGL. Over 245 to 256 the chain is Cytoplasmic; sequence RSGGTSRHPGPL.

This sequence belongs to the MHC class II family.

Its subcellular location is the membrane. In Mus musculus (Mouse), this protein is H-2 class II histocompatibility antigen, A-D alpha chain (H2-Aa).